The chain runs to 325 residues: Cytochrome c1, heme protein, mitochondrial (325 aa).

The transit peptide at methionine 1–alanine 84 directs the protein to the mitochondrion. At serine 85–glutamate 281 the chain is on the mitochondrial intermembrane side. The Cytochrome c domain occupies threonine 108 to aspartate 209. Cysteine 121, cysteine 124, histidine 125, and methionine 244 together coordinate heme c. The helical transmembrane segment at histidine 282–lysine 315 threads the bilayer. Residues serine 316–lysine 325 lie on the Mitochondrial matrix side of the membrane.

It belongs to the cytochrome c family. Component of the ubiquinol-cytochrome c oxidoreductase (cytochrome b-c1 complex, complex III, CIII), a multisubunit enzyme composed of 11 subunits. The complex is composed of 3 respiratory subunits cytochrome b, cytochrome c1 and Rieske protein UQCRFS1, 2 core protein subunits UQCRC1/QCR1 and UQCRC2/QCR2, and 6 low-molecular weight protein subunits UQCRH/QCR6, UQCRB/QCR7, UQCRQ/QCR8, UQCR10/QCR9, UQCR11/QCR10 and subunit 9, the cleavage product of Rieske protein UQCRFS1. The complex exists as an obligatory dimer and forms supercomplexes (SCs) in the inner mitochondrial membrane with NADH-ubiquinone oxidoreductase (complex I, CI) and cytochrome c oxidase (complex IV, CIV), resulting in different assemblies (supercomplex SCI(1)III(2)IV(1) and megacomplex MCI(2)III(2)IV(2)). Interacts with FLVCR2; this interaction occurs in the absence of heme and is disrupted upon heme binding. Heme c is required as a cofactor.

The protein localises to the mitochondrion inner membrane. It carries out the reaction a quinol + 2 Fe(III)-[cytochrome c](out) = a quinone + 2 Fe(II)-[cytochrome c](out) + 2 H(+)(out). Component of the ubiquinol-cytochrome c oxidoreductase, a multisubunit transmembrane complex that is part of the mitochondrial electron transport chain which drives oxidative phosphorylation. The respiratory chain contains 3 multisubunit complexes succinate dehydrogenase (complex II, CII), ubiquinol-cytochrome c oxidoreductase (cytochrome b-c1 complex, complex III, CIII) and cytochrome c oxidase (complex IV, CIV), that cooperate to transfer electrons derived from NADH and succinate to molecular oxygen, creating an electrochemical gradient over the inner membrane that drives transmembrane transport and the ATP synthase. The cytochrome b-c1 complex catalyzes electron transfer from ubiquinol to cytochrome c, linking this redox reaction to translocation of protons across the mitochondrial inner membrane, with protons being carried across the membrane as hydrogens on the quinol. In the process called Q cycle, 2 protons are consumed from the matrix, 4 protons are released into the intermembrane space and 2 electrons are passed to cytochrome c. Cytochrome c1 is a catalytic core subunit containing a c-type heme. It transfers electrons from the [2Fe-2S] iron-sulfur cluster of the Rieske protein to cytochrome c. This Bos taurus (Bovine) protein is Cytochrome c1, heme protein, mitochondrial (CYC1).